A 134-amino-acid chain; its full sequence is Small ribosomal subunit protein uS9 (134 aa).

Residues 97-134 are disordered; that stretch reads ENRQDLKSCGFLTRDPRKKERKKYGHKKARKSFQFSKR. Residues 115–134 show a composition bias toward basic residues; that stretch reads KERKKYGHKKARKSFQFSKR.

Belongs to the universal ribosomal protein uS9 family.

This is Small ribosomal subunit protein uS9 (rpsI) from Chlamydia pneumoniae (Chlamydophila pneumoniae).